Here is a 279-residue protein sequence, read N- to C-terminus: Pantothenate synthetase (279 aa).

26-33 (MGNLHEGH) contacts ATP. Catalysis depends on His-33, which acts as the Proton donor. Gln-57 lines the (R)-pantoate pocket. Gln-57 contacts beta-alanine. 144 to 147 (GKKD) is a binding site for ATP. A (R)-pantoate-binding site is contributed by Gln-150. ATP-binding positions include Val-173 and 181-184 (LSSR).

Belongs to the pantothenate synthetase family. Homodimer.

Its subcellular location is the cytoplasm. The catalysed reaction is (R)-pantoate + beta-alanine + ATP = (R)-pantothenate + AMP + diphosphate + H(+). It functions in the pathway cofactor biosynthesis; (R)-pantothenate biosynthesis; (R)-pantothenate from (R)-pantoate and beta-alanine: step 1/1. Catalyzes the condensation of pantoate with beta-alanine in an ATP-dependent reaction via a pantoyl-adenylate intermediate. In Burkholderia ambifaria (strain ATCC BAA-244 / DSM 16087 / CCUG 44356 / LMG 19182 / AMMD) (Burkholderia cepacia (strain AMMD)), this protein is Pantothenate synthetase.